We begin with the raw amino-acid sequence, 379 residues long: Succinyl-diaminopimelate desuccinylase (379 aa).

His-70 contacts Zn(2+). The active site involves Asp-72. Asp-103 lines the Zn(2+) pocket. The active-site Proton acceptor is the Glu-137. Zn(2+)-binding residues include Glu-138, Glu-166, and His-352.

It belongs to the peptidase M20A family. DapE subfamily. Homodimer. It depends on Zn(2+) as a cofactor. Requires Co(2+) as cofactor.

It carries out the reaction N-succinyl-(2S,6S)-2,6-diaminopimelate + H2O = (2S,6S)-2,6-diaminopimelate + succinate. It participates in amino-acid biosynthesis; L-lysine biosynthesis via DAP pathway; LL-2,6-diaminopimelate from (S)-tetrahydrodipicolinate (succinylase route): step 3/3. Its function is as follows. Catalyzes the hydrolysis of N-succinyl-L,L-diaminopimelic acid (SDAP), forming succinate and LL-2,6-diaminopimelate (DAP), an intermediate involved in the bacterial biosynthesis of lysine and meso-diaminopimelic acid, an essential component of bacterial cell walls. The chain is Succinyl-diaminopimelate desuccinylase from Burkholderia multivorans (strain ATCC 17616 / 249).